The primary structure comprises 554 residues: Dihydroxy-acid dehydratase (554 aa).

Aspartate 78 serves as a coordination point for Mg(2+). A [2Fe-2S] cluster-binding site is contributed by cysteine 119. Aspartate 120 and lysine 121 together coordinate Mg(2+). At lysine 121 the chain carries N6-carboxylysine. Cysteine 191 provides a ligand contact to [2Fe-2S] cluster. Glutamate 442 contacts Mg(2+). Residue serine 468 is the Proton acceptor of the active site.

The protein belongs to the IlvD/Edd family. In terms of assembly, homodimer. The cofactor is [2Fe-2S] cluster. It depends on Mg(2+) as a cofactor.

The enzyme catalyses (2R)-2,3-dihydroxy-3-methylbutanoate = 3-methyl-2-oxobutanoate + H2O. It carries out the reaction (2R,3R)-2,3-dihydroxy-3-methylpentanoate = (S)-3-methyl-2-oxopentanoate + H2O. It functions in the pathway amino-acid biosynthesis; L-isoleucine biosynthesis; L-isoleucine from 2-oxobutanoate: step 3/4. It participates in amino-acid biosynthesis; L-valine biosynthesis; L-valine from pyruvate: step 3/4. Its function is as follows. Functions in the biosynthesis of branched-chain amino acids. Catalyzes the dehydration of (2R,3R)-2,3-dihydroxy-3-methylpentanoate (2,3-dihydroxy-3-methylvalerate) into 2-oxo-3-methylpentanoate (2-oxo-3-methylvalerate) and of (2R)-2,3-dihydroxy-3-methylbutanoate (2,3-dihydroxyisovalerate) into 2-oxo-3-methylbutanoate (2-oxoisovalerate), the penultimate precursor to L-isoleucine and L-valine, respectively. This is Dihydroxy-acid dehydratase from Hydrogenobaculum sp. (strain Y04AAS1).